Reading from the N-terminus, the 189-residue chain is Glycerol-3-phosphate acyltransferase (189 aa).

The next 5 helical transmembrane spans lie at 1–21 (MFWLLAIFAYLLGSLSFAILL), 51–71 (LAVLTLLGDLCKGLAPVLIAH), 77–97 (LQQQAWVGLYAVLGHLFPLYF), 111–131 (MLLGLYPPAALLAIAAWALTF), and 151–171 (LLAWQEPEALLPMSVLTLLIV).

The protein belongs to the PlsY family. In terms of assembly, probably interacts with PlsX.

It localises to the cell inner membrane. It catalyses the reaction an acyl phosphate + sn-glycerol 3-phosphate = a 1-acyl-sn-glycero-3-phosphate + phosphate. It functions in the pathway lipid metabolism; phospholipid metabolism. In terms of biological role, catalyzes the transfer of an acyl group from acyl-phosphate (acyl-PO(4)) to glycerol-3-phosphate (G3P) to form lysophosphatidic acid (LPA). This enzyme utilizes acyl-phosphate as fatty acyl donor, but not acyl-CoA or acyl-ACP. This is Glycerol-3-phosphate acyltransferase from Pseudomonas fluorescens (strain ATCC BAA-477 / NRRL B-23932 / Pf-5).